Reading from the N-terminus, the 357-residue chain is Red-sensitive opsin-1 (357 aa).

Residues 1–49 are Extracellular-facing; that stretch reads MAEHWGDAIYAARRKGDETTREAMFTYTNSNNTKDPFEGPNYHIAPRWV. A glycan (N-linked (GlcNAc...) asparagine) is linked at Asn-31. The chain crosses the membrane as a helical span at residues 50–74; the sequence is YNVATVWMFFVVVASTFTNGLVLVA. Topologically, residues 75–86 are cytoplasmic; the sequence is TAKFKKLRHPLN. A helical transmembrane segment spans residues 87-112; that stretch reads WILVNLAIADLGETLFASTISVINQF. Residues 113–126 are Extracellular-facing; the sequence is FGYFILGHPMCIFE. A disulfide bridge connects residues Cys-123 and Cys-200. A helical membrane pass occupies residues 127–146; that stretch reads GYTVSVCGIAALWSLTVISW. Over 147–165 the chain is Cytoplasmic; the sequence is ERWVVVCKPFGNVKFDAKW. The chain crosses the membrane as a helical span at residues 166–189; sequence ASAGIIFSWVWAAAWCAPPIFGWS. The Extracellular segment spans residues 190-215; sequence RYWPHGLKTSCGPDVFSGSEDPGVQS. Residues 216–243 form a helical membrane-spanning segment; the sequence is YMVVLMITCCIIPLAIIILCYIAVYLAI. Residues 244 to 265 lie on the Cytoplasmic side of the membrane; sequence HAVAQQQKDSESTQKAEKEVSR. A helical membrane pass occupies residues 266–289; the sequence is MVVVMIFAYCFCWGPYTFFACFAA. Topologically, residues 290–297 are extracellular; that stretch reads ANPGYAFH. Residues 298–322 traverse the membrane as a helical segment; that stretch reads PLAAAMPAYFAKSATIYNPVIYVFM. N6-(retinylidene)lysine is present on Lys-309. Residues 323–357 are Cytoplasmic-facing; it reads NRQFRVCIMQLFGKKVDDGSEVSTSKTEVSSVAPA.

This sequence belongs to the G-protein coupled receptor 1 family. Opsin subfamily. In terms of processing, phosphorylated on some or all of the serine and threonine residues present in the C-terminal region. In terms of tissue distribution, retinal double cone principal photoreceptor cell outer segments.

The protein localises to the membrane. In terms of biological role, visual pigments are the light-absorbing molecules that mediate vision. They consist of an apoprotein, opsin, covalently linked to cis-retinal. This chain is Red-sensitive opsin-1 (opn1lw1), found in Danio rerio (Zebrafish).